Here is a 453-residue protein sequence, read N- to C-terminus: Bifunctional protein GlmU (453 aa).

Residues 1 to 225 (MNIVILAAGT…EWETLGVNSK (225 aa)) form a pyrophosphorylase region. UDP-N-acetyl-alpha-D-glucosamine is bound by residues 6 to 9 (LAAG), Lys20, Gln71, 76 to 77 (GT), 98 to 100 (YGD), Gly135, Glu150, Asn165, and Asn223. Asp100 lines the Mg(2+) pocket. Asn223 is a Mg(2+) binding site. The linker stretch occupies residues 226-246 (AQLAELERIHQRNLADALLAA). The N-acetyltransferase stretch occupies residues 247–453 (GVTLADPARI…GYVRPVKKKS (207 aa)). UDP-N-acetyl-alpha-D-glucosamine contacts are provided by Arg329 and Lys347. Catalysis depends on His359, which acts as the Proton acceptor. Positions 362 and 373 each coordinate UDP-N-acetyl-alpha-D-glucosamine. Acetyl-CoA-binding positions include Ala376, 382–383 (NY), Ser401, and Ala419.

The protein in the N-terminal section; belongs to the N-acetylglucosamine-1-phosphate uridyltransferase family. In the C-terminal section; belongs to the transferase hexapeptide repeat family. Homotrimer. It depends on Mg(2+) as a cofactor.

The protein resides in the cytoplasm. The enzyme catalyses alpha-D-glucosamine 1-phosphate + acetyl-CoA = N-acetyl-alpha-D-glucosamine 1-phosphate + CoA + H(+). It carries out the reaction N-acetyl-alpha-D-glucosamine 1-phosphate + UTP + H(+) = UDP-N-acetyl-alpha-D-glucosamine + diphosphate. Its pathway is nucleotide-sugar biosynthesis; UDP-N-acetyl-alpha-D-glucosamine biosynthesis; N-acetyl-alpha-D-glucosamine 1-phosphate from alpha-D-glucosamine 6-phosphate (route II): step 2/2. The protein operates within nucleotide-sugar biosynthesis; UDP-N-acetyl-alpha-D-glucosamine biosynthesis; UDP-N-acetyl-alpha-D-glucosamine from N-acetyl-alpha-D-glucosamine 1-phosphate: step 1/1. It functions in the pathway bacterial outer membrane biogenesis; LPS lipid A biosynthesis. Functionally, catalyzes the last two sequential reactions in the de novo biosynthetic pathway for UDP-N-acetylglucosamine (UDP-GlcNAc). The C-terminal domain catalyzes the transfer of acetyl group from acetyl coenzyme A to glucosamine-1-phosphate (GlcN-1-P) to produce N-acetylglucosamine-1-phosphate (GlcNAc-1-P), which is converted into UDP-GlcNAc by the transfer of uridine 5-monophosphate (from uridine 5-triphosphate), a reaction catalyzed by the N-terminal domain. This chain is Bifunctional protein GlmU, found in Burkholderia mallei (strain NCTC 10247).